Reading from the N-terminus, the 411-residue chain is Arginine deiminase (411 aa).

The Amidino-cysteine intermediate role is filled by Cys401.

The protein belongs to the arginine deiminase family.

The protein localises to the cytoplasm. It catalyses the reaction L-arginine + H2O = L-citrulline + NH4(+). It functions in the pathway amino-acid degradation; L-arginine degradation via ADI pathway; carbamoyl phosphate from L-arginine: step 1/2. The chain is Arginine deiminase from Streptococcus pyogenes serotype M49 (strain NZ131).